The sequence spans 227 residues: ATP synthase F(0) complex subunit a (227 aa).

The next 6 helical transmembrane spans lie at 14–34, 73–93, 98–118, 137–157, 179–199, and 203–223; these read FLGI…IPTP, LASL…PYIF, QLSL…LIGM, ALIP…PLAL, VFVL…LLLL, and LEVA…SLYL.

This sequence belongs to the ATPase A chain family. In terms of assembly, component of the ATP synthase complex composed at least of ATP5F1A/subunit alpha, ATP5F1B/subunit beta, ATP5MC1/subunit c (homooctomer), MT-ATP6/subunit a, MT-ATP8/subunit 8, ATP5ME/subunit e, ATP5MF/subunit f, ATP5MG/subunit g, ATP5MK/subunit k, ATP5MJ/subunit j, ATP5F1C/subunit gamma, ATP5F1D/subunit delta, ATP5F1E/subunit epsilon, ATP5PF/subunit F6, ATP5PB/subunit b, ATP5PD/subunit d, ATP5PO/subunit OSCP. ATP synthase complex consists of a soluble F(1) head domain (subunits alpha(3) and beta(3)) - the catalytic core - and a membrane F(0) domain - the membrane proton channel (subunits c, a, 8, e, f, g, k and j). These two domains are linked by a central stalk (subunits gamma, delta, and epsilon) rotating inside the F1 region and a stationary peripheral stalk (subunits F6, b, d, and OSCP). Interacts with DNAJC30; interaction is direct.

Its subcellular location is the mitochondrion inner membrane. The enzyme catalyses H(+)(in) = H(+)(out). Its function is as follows. Subunit a, of the mitochondrial membrane ATP synthase complex (F(1)F(0) ATP synthase or Complex V) that produces ATP from ADP in the presence of a proton gradient across the membrane which is generated by electron transport complexes of the respiratory chain. ATP synthase complex consist of a soluble F(1) head domain - the catalytic core - and a membrane F(1) domain - the membrane proton channel. These two domains are linked by a central stalk rotating inside the F(1) region and a stationary peripheral stalk. During catalysis, ATP synthesis in the catalytic domain of F(1) is coupled via a rotary mechanism of the central stalk subunits to proton translocation. With the subunit c (ATP5MC1), forms the proton-conducting channel in the F(0) domain, that contains two crucial half-channels (inlet and outlet) that facilitate proton movement from the mitochondrial intermembrane space (IMS) into the matrix. Protons are taken up via the inlet half-channel and released through the outlet half-channel, following a Grotthuss mechanism. This chain is ATP synthase F(0) complex subunit a, found in Gadus morhua (Atlantic cod).